The following is a 152-amino-acid chain: Mediator of RNA polymerase II transcription subunit 9 (152 aa).

Residues 98-150 are a coiled coil; it reads IKRCKALLQENEEVRNLLANSIEEWENIIADKEQQLRVKAKVLRDLDARIEKI.

This sequence belongs to the Mediator complex subunit 9 family. As to quaternary structure, component of the Mediator complex.

It localises to the nucleus. Component of the Mediator complex, a coactivator involved in the regulated transcription of nearly all RNA polymerase II-dependent genes. Mediator functions as a bridge to convey information from gene-specific regulatory proteins to the basal RNA polymerase II transcription machinery. Mediator is recruited to promoters by direct interactions with regulatory proteins and serves as a scaffold for the assembly of a functional preinitiation complex with RNA polymerase II and the general transcription factors. This Candida glabrata (strain ATCC 2001 / BCRC 20586 / JCM 3761 / NBRC 0622 / NRRL Y-65 / CBS 138) (Yeast) protein is Mediator of RNA polymerase II transcription subunit 9 (CSE2).